Consider the following 529-residue polypeptide: Scarecrow-like protein 13 (529 aa).

Polar residues predominate over residues 51-81; sequence ASGSLPSYDSPSVSITSGRSPFSPQGSQSCI. Residues 51–84 are disordered; it reads ASGSLPSYDSPSVSITSGRSPFSPQGSQSCISDL. One can recognise a GRAS domain in the interval 146 to 525; sequence LLALTPQLDL…RPMATCSVWK (380 aa). Residues 153-213 form a leucine repeat I (LRI) region; it reads LDLKEVLVEA…RARLEGSGSN (61 aa). Positions 232–297 are VHIID; that stretch reads MSVLYEICPY…GGPPLLRVTG (66 aa). Positions 263–267 match the VHIID motif; that stretch reads VHIID. The leucine repeat II (LRII) stretch occupies residues 313 to 345; it reads LVGERLATLAQSCGVPFEFHDAIMSGCKVQREH. Positions 354–448 are PFYRE; the sequence is VVVNFPYVLH…QHCVARDIVN (95 aa). The segment at 451 to 525 is SAW; that stretch reads ACEESERVER…RPMATCSVWK (75 aa).

It belongs to the GRAS family. As to expression, expressed in roots, hypocotyls, cotyledons, shoot apex, leaves, flowers and siliques.

Its subcellular location is the cytoplasm. The protein resides in the nucleus. Functionally, probable transcription factor that acts as a positive regulator of continuous red light signals downstream of phytochrome B (phyB). Required for the regulation of hypocotyl elongation during de-etiolation. May be required to modulate phytochrome A (phyA) signal transduction in a phyB-independent way. In Arabidopsis thaliana (Mouse-ear cress), this protein is Scarecrow-like protein 13 (SCL13).